We begin with the raw amino-acid sequence, 94 residues long: Co-chaperonin GroES (94 aa).

This sequence belongs to the GroES chaperonin family. In terms of assembly, heptamer of 7 subunits arranged in a ring. Interacts with the chaperonin GroEL.

It is found in the cytoplasm. Its function is as follows. Together with the chaperonin GroEL, plays an essential role in assisting protein folding. The GroEL-GroES system forms a nano-cage that allows encapsulation of the non-native substrate proteins and provides a physical environment optimized to promote and accelerate protein folding. GroES binds to the apical surface of the GroEL ring, thereby capping the opening of the GroEL channel. This is Co-chaperonin GroES from Halothermothrix orenii (strain H 168 / OCM 544 / DSM 9562).